Here is a 544-residue protein sequence, read N- to C-terminus: D-2-hydroxyglutarate dehydrogenase, mitochondrial (544 aa).

A mitochondrion-targeting transit peptide spans 1–10 (MMMPRLVPRW). An FAD-binding PCMH-type domain is found at 119-298 (VRGSSKVLLR…TAVSILCPPK (180 aa)). The residue at position 124 (Lys124) is an N6-succinyllysine. (R)-2-hydroxyglutarate contacts are provided by Arg409, Thr413, and Lys424. (R)-lactate is bound at residue Arg409. (R)-malate is bound by residues Arg409, Thr413, and Lys424. Zn(2+)-binding residues include His457 and His464. A (R)-2-hydroxyglutarate-binding site is contributed by Asn466. Glu498 contacts Zn(2+). A (R)-2-hydroxyglutarate-binding site is contributed by His499. His499 serves as a coordination point for (R)-lactate. Residue His499 coordinates (R)-malate.

This sequence belongs to the FAD-binding oxidoreductase/transferase type 4 family. The cofactor is FAD.

It localises to the mitochondrion. The enzyme catalyses (R)-2-hydroxyglutarate + A = 2-oxoglutarate + AH2. It carries out the reaction (R)-malate + A = oxaloacetate + AH2. Its activity is regulated as follows. Activated by zinc and cobalt ions. Its function is as follows. Catalyzes the oxidation of D-2-hydroxyglutarate (D-2-HG) to alpha-ketoglutarate. Also catalyzes the oxidation of other D-2-hydroxyacids, such as D-malate (D-MAL) and D-lactate (D-LAC). Exhibits high activities towards D-2-HG and D-MAL but a very weak activity towards D-LAC. This chain is D-2-hydroxyglutarate dehydrogenase, mitochondrial (D2HGDH), found in Bos taurus (Bovine).